Reading from the N-terminus, the 461-residue chain is Gustatory and pheromone receptor 32a (461 aa).

Topologically, residues 1–100 (MSPNTWVIEM…YSFFVRGVVH (100 aa)) are cytoplasmic. Residues 101 to 121 (ALTIFNVYSLFTPISAQLFFS) traverse the membrane as a helical segment. Residues 122–127 (YRETDN) are Extracellular-facing. A helical membrane pass occupies residues 128 to 148 (VNQWIELLLCILTYTLTVFVC). Residues 149–180 (AHNTTSMLRIMNEILQLDEEVRRQFGANLSQN) are Cytoplasmic-facing. A helical transmembrane segment spans residues 181 to 201 (FGFLVKFLVGITACQAYIIVL). The Extracellular segment spans residues 202–214 (KIYAVQGEITPTS). A helical transmembrane segment spans residues 215-235 (YILLAFYGIQNGLTATYIVFA). At 236–317 (SALLRIVYIR…YKGINDCCNL (82 aa)) the chain is on the cytoplasmic side. The helical transmembrane segment at 318–338 (ILVSFLGYSFYTVTTNCYNLF) threads the bilayer. Topologically, residues 339–348 (VQITGKGMVS) are extracellular. The chain crosses the membrane as a helical span at residues 349-369 (PNILQWCFAWLCLHVSLLALL). At 370–414 (SRSCGLTTTEANATSQILARVYAKSKEYQNIIDKFLTKSIKQEVQ) the chain is on the cytoplasmic side. The helical transmembrane segment at 415–435 (FTAYGFFAIDNSTLFKIFSAV) threads the bilayer. Residues 436–461 (TTYLVILIQFKQLEDSKVEDPVPEQT) are Extracellular-facing.

Belongs to the insect chemoreceptor superfamily. Gustatory receptor (GR) family. Gr21a subfamily. In terms of tissue distribution, expressed in the adult labellar chemosensory neurons. Expressed in tarsal neurons for male-male courtship suppression. In larvae, is expressed in neurons of the terminal external chemosensory organ, and the dorsal and posterior external chemosensory organs.

The protein resides in the cell membrane. In terms of biological role, gustatory receptor which mediates acceptance or avoidance behavior, depending on its substrates. Required for the response to N,N-Diethyl-meta-toluamide (DEET), the most widely used insect repellent worldwide. Functions as a pheromone receptor for a male inhibitory pheromone and promotes male-male aggression and suppresses male-male courtship. Also promotes preferentially virgin females courting over mated females. The sequence is that of Gustatory and pheromone receptor 32a (Gr32a) from Drosophila melanogaster (Fruit fly).